Consider the following 589-residue polypeptide: Aspartate--tRNA ligase 2 (589 aa).

Position 174 (E174) interacts with L-aspartate. Residues 198-201 (QITK) are aspartate. Position 220 (R220) interacts with L-aspartate. Residues 220-222 (RDE) and Q229 each bind ATP. An L-aspartate-binding site is contributed by H443. E477 provides a ligand contact to ATP. Residue R484 participates in L-aspartate binding. 529–532 (GLDR) lines the ATP pocket.

It belongs to the class-II aminoacyl-tRNA synthetase family. Type 1 subfamily. In terms of assembly, homodimer.

It localises to the cytoplasm. It catalyses the reaction tRNA(Asp) + L-aspartate + ATP = L-aspartyl-tRNA(Asp) + AMP + diphosphate. In terms of biological role, catalyzes the attachment of L-aspartate to tRNA(Asp) in a two-step reaction: L-aspartate is first activated by ATP to form Asp-AMP and then transferred to the acceptor end of tRNA(Asp). This Streptococcus mutans serotype c (strain ATCC 700610 / UA159) protein is Aspartate--tRNA ligase 2.